A 128-amino-acid polypeptide reads, in one-letter code: UPF0292 protein MJ1624 (128 aa).

In terms of domain architecture, Toprim spans 23–105 (EKPIIVEGKR…KVNTKIRHEI (83 aa)). Mg(2+)-binding residues include Glu29, Asp74, and Asp76.

The protein belongs to the UPF0292 family. Mg(2+) serves as cofactor.

This chain is UPF0292 protein MJ1624, found in Methanocaldococcus jannaschii (strain ATCC 43067 / DSM 2661 / JAL-1 / JCM 10045 / NBRC 100440) (Methanococcus jannaschii).